A 718-amino-acid chain; its full sequence is Putative aminodeoxychorismate synthase (718 aa).

The 195-residue stretch at 9–203 folds into the Glutamine amidotransferase type-1 domain; the sequence is QILLIDCYDS…LSLADTPNIQ (195 aa). Cysteine 88 serves as the catalytic Nucleophile. Catalysis depends on residues histidine 177 and glutamate 179. The tract at residues 266–718 is PABB component; the sequence is FLDSAKKPGR…NLKNKKRSCK (453 aa).

In the C-terminal section; belongs to the anthranilate synthase component I family.

It is found in the cytoplasm. Its subcellular location is the nucleus. The catalysed reaction is chorismate + L-glutamine = 4-amino-4-deoxychorismate + L-glutamate. Its pathway is cofactor biosynthesis; tetrahydrofolate biosynthesis; 4-aminobenzoate from chorismate: step 1/2. Its function is as follows. Catalyzes the biosynthesis of 4-amino-4-deoxychorismate (ADC) from chorismate and glutamine. Required for the synthesis of 4-aminobenzoate (PABA), an important component in tetrahydrofolate biosynthesis. This is Putative aminodeoxychorismate synthase from Schizosaccharomyces pombe (strain 972 / ATCC 24843) (Fission yeast).